Reading from the N-terminus, the 390-residue chain is Putative cyclin-F2-1 (390 aa).

Residues 135–154 form a disordered region; sequence YNGDDDAPAPDDSMASRPQL.

This sequence belongs to the cyclin family. Cyclin F subfamily.

The chain is Putative cyclin-F2-1 (CycF2-1) from Oryza sativa subsp. japonica (Rice).